A 255-amino-acid polypeptide reads, in one-letter code: MKTLTVKEIKEHLQSVSDEKDPFIEQCKNDERKSVQALVDAWLKKNERLSAMREEWQAMTSFERSLRARGYQYIAGIDEAGRGPLAGPVVAAAVILKEDCEILGLTDSKKLSKQKREDYYSYIMEEAAAVGVGIADAHEIDELNIYEASKAAMLKAVQALDVAPDYLLIDAMSLAVDTEQSSIIKGDAKSASIAAGACIAKVTRDRLMDEYAEKYPLYGFEKHKGYGTKEHLNALAKYGPSPIHRRSFAPVKAHE.

The region spanning 72 to 255 (QYIAGIDEAG…RSFAPVKAHE (184 aa)) is the RNase H type-2 domain. The a divalent metal cation site is built by Asp-78, Glu-79, and Asp-170.

This sequence belongs to the RNase HII family. Requires Mn(2+) as cofactor. It depends on Mg(2+) as a cofactor.

It is found in the cytoplasm. It catalyses the reaction Endonucleolytic cleavage to 5'-phosphomonoester.. Its function is as follows. Endonuclease that specifically degrades the RNA of RNA-DNA hybrids. This chain is Ribonuclease HII, found in Bacillus licheniformis (strain ATCC 14580 / DSM 13 / JCM 2505 / CCUG 7422 / NBRC 12200 / NCIMB 9375 / NCTC 10341 / NRRL NRS-1264 / Gibson 46).